The following is a 127-amino-acid chain: Large ribosomal subunit protein eL32 (127 aa).

The span at 38-48 (WRRPKGIDSKM) shows a compositional bias: basic and acidic residues. Residues 38 to 66 (WRRPKGIDSKMRLKKKGKPRSPSIGWSSP) form a disordered region.

The protein belongs to the eukaryotic ribosomal protein eL32 family.

The sequence is that of Large ribosomal subunit protein eL32 from Thermococcus gammatolerans (strain DSM 15229 / JCM 11827 / EJ3).